The chain runs to 239 residues: Ribonuclease PH (239 aa).

Phosphate-binding positions include arginine 87 and 125–127 (GTR).

It belongs to the RNase PH family. In terms of assembly, homohexameric ring arranged as a trimer of dimers.

The catalysed reaction is tRNA(n+1) + phosphate = tRNA(n) + a ribonucleoside 5'-diphosphate. In terms of biological role, phosphorolytic 3'-5' exoribonuclease that plays an important role in tRNA 3'-end maturation. Removes nucleotide residues following the 3'-CCA terminus of tRNAs; can also add nucleotides to the ends of RNA molecules by using nucleoside diphosphates as substrates, but this may not be physiologically important. Probably plays a role in initiation of 16S rRNA degradation (leading to ribosome degradation) during starvation. This Pseudomonas paraeruginosa (strain DSM 24068 / PA7) (Pseudomonas aeruginosa (strain PA7)) protein is Ribonuclease PH.